A 242-amino-acid polypeptide reads, in one-letter code: Uridylate kinase (242 aa).

15–18 (KLSG) is a binding site for ATP. Gly57 lines the UMP pocket. ATP is bound by residues Gly58 and Arg62. Residues Asp78 and 139 to 146 (TGNPFFTT) contribute to the UMP site. ATP-binding residues include Thr166, Tyr172, and Asp175.

It belongs to the UMP kinase family. Homohexamer.

The protein resides in the cytoplasm. The catalysed reaction is UMP + ATP = UDP + ADP. It functions in the pathway pyrimidine metabolism; CTP biosynthesis via de novo pathway; UDP from UMP (UMPK route): step 1/1. With respect to regulation, inhibited by UTP. In terms of biological role, catalyzes the reversible phosphorylation of UMP to UDP. In Acinetobacter baylyi (strain ATCC 33305 / BD413 / ADP1), this protein is Uridylate kinase.